Consider the following 401-residue polypeptide: S-adenosylmethionine synthase (401 aa).

Histidine 16 lines the ATP pocket. Aspartate 18 contacts Mg(2+). Glutamate 44 contributes to the K(+) binding site. 2 residues coordinate L-methionine: glutamate 57 and glutamine 100. Residues 100–110 (QSPDIAQGVNE) form a flexible loop region. ATP contacts are provided by residues 174–176 (DAK), 241–242 (RF), aspartate 250, 256–257 (RK), alanine 273, and lysine 277. Position 250 (aspartate 250) interacts with L-methionine. Residue lysine 281 participates in L-methionine binding.

Belongs to the AdoMet synthase family. In terms of assembly, homotetramer; dimer of dimers. Mg(2+) serves as cofactor. Requires K(+) as cofactor.

Its subcellular location is the cytoplasm. The enzyme catalyses L-methionine + ATP + H2O = S-adenosyl-L-methionine + phosphate + diphosphate. The protein operates within amino-acid biosynthesis; S-adenosyl-L-methionine biosynthesis; S-adenosyl-L-methionine from L-methionine: step 1/1. Catalyzes the formation of S-adenosylmethionine (AdoMet) from methionine and ATP. The overall synthetic reaction is composed of two sequential steps, AdoMet formation and the subsequent tripolyphosphate hydrolysis which occurs prior to release of AdoMet from the enzyme. This Streptococcus equi subsp. zooepidemicus (strain MGCS10565) protein is S-adenosylmethionine synthase.